We begin with the raw amino-acid sequence, 545 residues long: Endo-beta-N-acetylglucosaminidase (545 aa).

Positions 1–36 are cleaved as a signal peptide; it reads MTFIKQMMPRYVASMTAGIVAAAMAATCAFAPVANA. The 283-residue stretch at 51–333 folds into the GH18 domain; that stretch reads RHFMVYYRAW…EDLRRIVPSN (283 aa). The active-site Proton donor is the E184. A disordered region spans residues 486 to 511; it reads PVPTPDSTDQNGNRDKVTNHKVQGQP. A helical membrane pass occupies residues 518-538; sequence GISTDIIVAVGVTLAIAGVAL.

Belongs to the glycosyl hydrolase 18 family.

The protein localises to the cell membrane. The enzyme catalyses an N(4)-(oligosaccharide-(1-&gt;3)-[oligosaccharide-(1-&gt;6)]-beta-D-Man-(1-&gt;4)-beta-D-GlcNAc-(1-&gt;4)-alpha-D-GlcNAc)-L-asparaginyl-[protein] + H2O = an oligosaccharide-(1-&gt;3)-[oligosaccharide-(1-&gt;6)]-beta-D-Man-(1-&gt;4)-D-GlcNAc + N(4)-(N-acetyl-beta-D-glucosaminyl)-L-asparaginyl-[protein]. Its function is as follows. Endoglycosidase with broad specificity that cleaves the chitobiose core of high mannose and complex N-linked glycans. Is able to release N-glycans from diverse host glycoproteins such as human and bovine lactoferrin, immunoglobulins A and G, and ribonuclease B. Is active directly on human breast milk - a complex matrix of lipids, oligosaccharides, and proteins with disparate glycosylation types - successfully removing a significant proportion of the total amount of N-glycans. Does not recognize O-linked glycans or free human milk oligosaccharides (HMO). The sequence is that of Endo-beta-N-acetylglucosaminidase from Bifidobacterium longum subsp. infantis (strain ATCC 15697 / DSM 20088 / JCM 1222 / NCTC 11817 / S12).